A 314-amino-acid chain; its full sequence is Ribonuclease Z (314 aa).

Residues His62, His64, Asp66, His67, His144, Asp215, and His273 each contribute to the Zn(2+) site. Asp66 functions as the Proton acceptor in the catalytic mechanism.

Belongs to the RNase Z family. Homodimer. Zn(2+) serves as cofactor.

The catalysed reaction is Endonucleolytic cleavage of RNA, removing extra 3' nucleotides from tRNA precursor, generating 3' termini of tRNAs. A 3'-hydroxy group is left at the tRNA terminus and a 5'-phosphoryl group is left at the trailer molecule.. Zinc phosphodiesterase, which displays some tRNA 3'-processing endonuclease activity. Probably involved in tRNA maturation, by removing a 3'-trailer from precursor tRNA. The protein is Ribonuclease Z of Prochlorococcus marinus (strain NATL2A).